We begin with the raw amino-acid sequence, 2406 residues long: Highly reducing polyketide synthase dmxL2 (2406 aa).

A Ketosynthase family 3 (KS3) domain is found at 1–399 (MEAFWSASKK…GTNAHAVLDD (399 aa)). Cysteine 130 is an active-site residue. Residue cysteine 130 is the For beta-ketoacyl synthase activity of the active site. A disordered region spans residues 414–476 (GHASNGTNGT…GPTDGPTSRP (63 aa)). Residues 417–448 (SNGTNGTLTNGHILNGEHTSNGMNGTLTNGHA) show a composition bias toward polar residues. A malonyl-CoA:ACP transacylase (MAT) domain region spans residues 574 to 911 (FVFTGQGAQW…LAGSLFTQGY (338 aa)). The active-site For malonyltransferase activity is the serine 665. Residues 962 to 1096 (PSLLGSPSPS…GLLVIEYEAA (135 aa)) are N-terminal hotdog fold. The PKS/mFAS DH domain maps to 962–1278 (PSLLGSPSPS…CAEIAGASSN (317 aa)). The dehydratase (DH) domain stretch occupies residues 964–1273 (LLGSPSPSLA…IEGFLCAEIA (310 aa)). Residue histidine 994 is the Proton acceptor; for dehydratase activity of the active site. Residues 1124-1278 (VHRLDPSGFY…CAEIAGASSN (155 aa)) form a C-terminal hotdog fold region. The Proton donor; for dehydratase activity role is filled by aspartate 1189. The interval 1694–2006 (GMLGSVCLEP…TGKHLGKIAL (313 aa)) is enoylreductase (ER) domain. Residues 2032–2210 (GVYLLVGGLG…TTVDLGIMRD (179 aa)) form a ketoreductase (KR) domain region. The Carrier domain occupies 2318-2395 (EASDSVLEAL…TFCNRIAAKS (78 aa)). Serine 2355 is subject to O-(pantetheine 4'-phosphoryl)serine.

It participates in secondary metabolite biosynthesis. Its function is as follows. Highly reducing polyketide synthase; part of the gene cluster that mediates the biosynthesis of the dimeric xanthones cryptosporioptides. The pathway begins with the synthesis of atrochrysone thioester by the polyketide synthase dmx-nrPKS. The atrochrysone carboxyl ACP thioesterase dmxR1 then breaks the thioester bond and releases the atrochrysone carboxylic acid from dmx-nrPKS. Atrochrysone carboxylic acid is decarboxylated by the decarboxylase dmxR15, and oxidized by the anthrone oxygenase dmxR16 to yield emodin. Emodin is then reduced to emodin hydroquinone by the oxidoreductase dmxR7. A-ring reduction by the short chain dehydrogenase dmxR18, dehydration by the scytalone dehydratase-like protein dmxR17 and probable spontaneous re-oxidation, results in overall deoxygenation to chrysophanol. Baeyer-Villiger oxidation by the Baeyer-Villiger monooxygenase (BVMO) dmxR6 then yields monodictylactone in equilibrium with monodictyphenone. In the case of the cryptosporioptides biosynthesis, monodictylactone is reduced at C-12 to an alcohol (by the short chain dehydrogenases dmxR12 or dmxR8) and hydroxylated at C-5 by dmxR9, yielding the electron-rich aromatic which could eliminate H(2)O to form the ortho-quinonemethide, followed by tautomerisation to paraquinone and complete the formal reduction to produce the 10-methylgroup. Conjugate addition of C-4a-OH to the resulting paraquinone by the monooxygenase dmxR10 then gives cyclohexadienone, which is then reduced at C-5 by the short chain dehydrogenase dmxR3 to give the dihydroxanthone. The 6,7-epoxide in the cryptosporioptides could be introduced by the cytochrome P450 monooxygenase dmxL3. The highly reducing PKS dmxL2 manufactures butyrate, which is further carboxylated by dmxL1 to form ethylmalonate. It is not yet clear whether the carboxylation occurs while the butyrate is attached to the ACP of dmxL2, but this unusual fungal metabolite could then be esterified to O-5 by the O-acetyltransferase dmxR13. Finally, dimerization performed by dmxR5 gives the observed dimers cryptosporioptides A, B and C as the final products of the pathway. This Cryptosporiopsis sp. (strain 8999) protein is Highly reducing polyketide synthase dmxL2.